Consider the following 118-residue polypeptide: Small ribosomal subunit protein uS13 (118 aa).

The interval 94–118 (GLPLRGQRTKTNARTRKGPRKPIRK) is disordered.

It belongs to the universal ribosomal protein uS13 family. As to quaternary structure, part of the 30S ribosomal subunit. Forms a loose heterodimer with protein S19. Forms two bridges to the 50S subunit in the 70S ribosome.

Located at the top of the head of the 30S subunit, it contacts several helices of the 16S rRNA. In the 70S ribosome it contacts the 23S rRNA (bridge B1a) and protein L5 of the 50S subunit (bridge B1b), connecting the 2 subunits; these bridges are implicated in subunit movement. Contacts the tRNAs in the A and P-sites. The protein is Small ribosomal subunit protein uS13 of Chromohalobacter salexigens (strain ATCC BAA-138 / DSM 3043 / CIP 106854 / NCIMB 13768 / 1H11).